We begin with the raw amino-acid sequence, 243 residues long: LexA repressor 2 (243 aa).

A DNA-binding region (H-T-H motif) is located at residues isoleucine 48 to arginine 68. Catalysis depends on for autocatalytic cleavage activity residues serine 167 and lysine 204.

Belongs to the peptidase S24 family. Homodimer.

It catalyses the reaction Hydrolysis of Ala-|-Gly bond in repressor LexA.. Functionally, represses a number of genes involved in the response to DNA damage (SOS response), including recA and lexA. In the presence of single-stranded DNA, RecA interacts with LexA causing an autocatalytic cleavage which disrupts the DNA-binding part of LexA, leading to derepression of the SOS regulon and eventually DNA repair. The chain is LexA repressor 2 from Nocardia farcinica (strain IFM 10152).